The sequence spans 259 residues: Putative hydro-lyase Rxyl_2409 (259 aa).

The tract at residues 1–24 (MGAPGAAEARERIRRGEHAGPTAG) is disordered. Positions 8–18 (EARERIRRGEH) are enriched in basic and acidic residues.

This sequence belongs to the D-glutamate cyclase family.

This is Putative hydro-lyase Rxyl_2409 from Rubrobacter xylanophilus (strain DSM 9941 / JCM 11954 / NBRC 16129 / PRD-1).